A 132-amino-acid chain; its full sequence is Acid shock protein (132 aa).

Residues 1 to 21 form the signal peptide; it reads MKKVLALIVAATMGLSSVAFA. Residues 22–69 constitute a propeptide that is removed on maturation; it reads AETTAAATAAPAATSTTAAPAVEKAAPAKATHHKKHKATKQTTEQKAQ. Residues 30–50 are compositionally biased toward low complexity; that stretch reads AAPAATSTTAAPAVEKAAPAK. Positions 30 to 132 are disordered; it reads AAPAATSTTA…AKKSATAPAA (103 aa). The segment covering 51–60 has biased composition (basic residues); sequence ATHHKKHKAT. Low complexity predominate over residues 61 to 99; sequence KQTTEQKAQAAKKAVKKAPAQKAQAAKKAVKKAPVQKAQ. Basic residues predominate over residues 100–124; it reads AAKKHVKKAPAQKAQAAKKHHKTAK.

It belongs to the Asr family. Proteolytic processing gives rise to the active protein.

The protein resides in the periplasm. Its function is as follows. Required for growth and/or survival at acidic conditions. The sequence is that of Acid shock protein from Yersinia enterocolitica serotype O:8 / biotype 1B (strain NCTC 13174 / 8081).